Here is a 227-residue protein sequence, read N- to C-terminus: Small ribosomal subunit protein uS3 (227 aa).

The KH type-2 domain occupies 24 to 94 (LDEYLEEELG…RVSIEVKELP (71 aa)). Residues 207 to 227 (EEVEDELKELIGKSEDEAEGA) form a disordered region.

It belongs to the universal ribosomal protein uS3 family. As to quaternary structure, part of the 30S ribosomal subunit.

Binds the lower part of the 30S subunit head. The protein is Small ribosomal subunit protein uS3 of Methanopyrus kandleri (strain AV19 / DSM 6324 / JCM 9639 / NBRC 100938).